Consider the following 407-residue polypeptide: Imidazolonepropionase (407 aa).

The Fe(3+) site is built by histidine 74 and histidine 76. Zn(2+) contacts are provided by histidine 74 and histidine 76. Arginine 83, tyrosine 146, and histidine 179 together coordinate 4-imidazolone-5-propanoate. Tyrosine 146 serves as a coordination point for N-formimidoyl-L-glutamate. Histidine 244 serves as a coordination point for Fe(3+). Histidine 244 contributes to the Zn(2+) binding site. 4-imidazolone-5-propanoate is bound at residue glutamine 247. Aspartate 319 serves as a coordination point for Fe(3+). Aspartate 319 contacts Zn(2+). Residues asparagine 321 and glycine 323 each coordinate N-formimidoyl-L-glutamate. Position 324 (threonine 324) interacts with 4-imidazolone-5-propanoate.

The protein belongs to the metallo-dependent hydrolases superfamily. HutI family. Requires Zn(2+) as cofactor. The cofactor is Fe(3+).

The protein localises to the cytoplasm. It catalyses the reaction 4-imidazolone-5-propanoate + H2O = N-formimidoyl-L-glutamate. It participates in amino-acid degradation; L-histidine degradation into L-glutamate; N-formimidoyl-L-glutamate from L-histidine: step 3/3. Catalyzes the hydrolytic cleavage of the carbon-nitrogen bond in imidazolone-5-propanoate to yield N-formimidoyl-L-glutamate. It is the third step in the universal histidine degradation pathway. This chain is Imidazolonepropionase, found in Salmonella schwarzengrund (strain CVM19633).